The chain runs to 409 residues: Elongation factor Tu (409 aa).

One can recognise a tr-type G domain in the interval 10-214 (KPHVNVGTIG…AVDSYIPTPE (205 aa)). Positions 19–26 (GHVDHGKT) are G1. Position 19–26 (19–26 (GHVDHGKT)) interacts with GTP. Thr-26 is a binding site for Mg(2+). The G2 stretch occupies residues 60–64 (GITIN). A G3 region spans residues 81–84 (DCPG). GTP is bound by residues 81–85 (DCPGH) and 136–139 (NKVD). A G4 region spans residues 136-139 (NKVD). The tract at residues 174-176 (SAL) is G5.

It belongs to the TRAFAC class translation factor GTPase superfamily. Classic translation factor GTPase family. EF-Tu/EF-1A subfamily. Monomer.

It is found in the cytoplasm. It carries out the reaction GTP + H2O = GDP + phosphate + H(+). Its function is as follows. GTP hydrolase that promotes the GTP-dependent binding of aminoacyl-tRNA to the A-site of ribosomes during protein biosynthesis. This chain is Elongation factor Tu, found in Synechococcus sp. (strain JA-3-3Ab) (Cyanobacteria bacterium Yellowstone A-Prime).